The chain runs to 166 residues: Transcriptional repressor NrdR (166 aa).

The segment at 3–34 (CPFCRNPDSRVVDSRMADDGSSIRRRRQCPEC) is a zinc-finger region. One can recognise an ATP-cone domain in the interval 46–136 (LSVIKRSGVG…VYQAFESLED (91 aa)).

Belongs to the NrdR family. Requires Zn(2+) as cofactor.

Its function is as follows. Negatively regulates transcription of bacterial ribonucleotide reductase nrd genes and operons by binding to NrdR-boxes. The sequence is that of Transcriptional repressor NrdR from Paenarthrobacter aurescens (strain TC1).